Here is a 476-residue protein sequence, read N- to C-terminus: Glycogen synthase (476 aa).

Lys15 serves as a coordination point for ADP-alpha-D-glucose.

The protein belongs to the glycosyltransferase 1 family. Bacterial/plant glycogen synthase subfamily.

The catalysed reaction is [(1-&gt;4)-alpha-D-glucosyl](n) + ADP-alpha-D-glucose = [(1-&gt;4)-alpha-D-glucosyl](n+1) + ADP + H(+). It participates in glycan biosynthesis; glycogen biosynthesis. In terms of biological role, synthesizes alpha-1,4-glucan chains using ADP-glucose. The polypeptide is Glycogen synthase (Marinomonas sp. (strain MWYL1)).